The chain runs to 134 residues: Prefoldin subunit 4 (134 aa).

An N-acetylalanine modification is found at Ala-2. Ser-125 carries the phosphoserine modification.

Belongs to the prefoldin subunit beta family. In terms of assembly, heterohexamer of two PFD-alpha type and four PFD-beta type subunits. Interacts with URI1; the interaction is phosphorylation-dependent and occurs in a growth-dependent manner.

Its subcellular location is the nucleus. It is found in the cytoplasm. The protein localises to the mitochondrion. Binds specifically to cytosolic chaperonin (c-CPN) and transfers target proteins to it. Binds to nascent polypeptide chain and promotes folding in an environment in which there are many competing pathways for nonnative proteins. In Bos taurus (Bovine), this protein is Prefoldin subunit 4 (PFDN4).